The chain runs to 159 residues: Transcription elongation factor GreA (159 aa).

Residues 1–76 (MAEEKEVVLT…SLEKTLKKAR (76 aa)) adopt a coiled-coil conformation.

It belongs to the GreA/GreB family.

Functionally, necessary for efficient RNA polymerase transcription elongation past template-encoded arresting sites. The arresting sites in DNA have the property of trapping a certain fraction of elongating RNA polymerases that pass through, resulting in locked ternary complexes. Cleavage of the nascent transcript by cleavage factors such as GreA or GreB allows the resumption of elongation from the new 3'terminus. GreA releases sequences of 2 to 3 nucleotides. This chain is Transcription elongation factor GreA, found in Syntrophomonas wolfei subsp. wolfei (strain DSM 2245B / Goettingen).